We begin with the raw amino-acid sequence, 1135 residues long: MARYTQRPENALKRANEFIEVGKPLRALDTLQEVFRNKRWNYAYSETVIEPLMFKYLYLCVELKKSHIAKEGLFQYRNMFQLVNVNSLENVIRGYLKMAEEHTEAAQAQSSAAVAVLELDDLDNIATPESILMSAVCGEDAQDRSDRTILLPWVKFLWESYCQCLELLRVNTHCEALYHDIARMAFQFCLKYNRKSEFRRLCDKLRKHLEDICKSSNQTTGVSINKVETQQLCLDTRLYLLDSAIQMELWQEAYKAIEDIHGLMALSKKTPVPKTMANYYQKLAMVFSKAGNQLFHAAALLKLFQLTRELKKNLTKDDLQRMAAHVLLATLSIPLPSAHPEFDRFIEADKSPLEKAQKLAVLLGLPQPPTRVSLIREVVRLNVPQLVSEDFRNLYNWLEVDFNPLNLCKRIQSIVDFIENGSENALLTPYIQSLKDVTIMRLIRQISQVYESIQFQRLLQLASFCNIFELEKLLVESVRHNDMQIRIDHQKNSIYFGTDLTESQREYRPDGPALQSMPSEQIRSQLVNMSTVLTRAVSIVYPNRERDQRAKLRTQMVNHYHEIKDREHQRILQRQKIIEDRKEYIEKQNNAREEEEARRQEEESRKAKLAEQKRLEQEQEERERKRHQNEIQAIREKSLKEKVQQISQTAHGKKMLSKLDEEGIKKLDAEQIAKRESEELQREAKELQSKLKSQEKKIDYFERAKRLEEIPLFEKYLAEKQVKDKEFWEATEKTRIENAIAERKDAVGQQERLKRMYPDRDEFLEALKKERASLYVEKLRKFEAALEAERKKRLADRIIRRREERRQAFLREKEEERLRKEEEIRLAQAAEERAAAEARRLEREADDEKRRAQYEKQRAKEEEAERKIKEDRERLARDLASERERTEKERDTWRPRGGDRPSAPAVGSGEWRRAAPTASERNERGGERIERGGDRIERGGERIERGGDRDRDRKDNEGADSSWRVRREPDSQRAAAPKDSNAQQSRDDKWRRGGERDRDFRNDGPRRDRDDGPRRERDDGPRRDRDDERGFRRNDGPRRTEEPQRETGGNWRDAPRNADRENRRPAGERRDRDVRETRGDQRGSAPKEASSGGGGGNWRTAPAAREEKPASKRDQPQEKENKAADDGEWTSVKRR.

The 183-residue stretch at 319-501 folds into the PCI domain; it reads LQRMAAHVLL…NSIYFGTDLT (183 aa). Basic and acidic residues-rich tracts occupy residues 588–623 and 829–899; these read QNNA…EERE and AAEE…RGGD. 2 disordered regions span residues 588-631 and 829-1135; these read QNNA…QNEI and AAEE…VKRR. At Ser908 the chain carries Phosphoserine. Basic and acidic residues-rich tracts occupy residues 920-971, 985-1045, 1053-1081, and 1104-1125; these read ERNE…EPDS, SRDD…EPQR, DAPR…RGDQ, and AREE…KAAD.

The protein belongs to the eIF-3 subunit A family. Component of the eukaryotic translation initiation factor 3 (eIF-3) complex. The eIF-3 complex interacts with pix.

It localises to the cytoplasm. RNA-binding component of the eukaryotic translation initiation factor 3 (eIF-3) complex, which is involved in protein synthesis of a specialized repertoire of mRNAs and, together with other initiation factors, stimulates binding of mRNA and methionyl-tRNAi to the 40S ribosome. The eIF-3 complex specifically targets and initiates translation of a subset of mRNAs involved in cell proliferation. The sequence is that of Eukaryotic translation initiation factor 3 subunit A from Drosophila erecta (Fruit fly).